The chain runs to 447 residues: Probable glycine dehydrogenase (decarboxylating) subunit 1 (447 aa).

Belongs to the GcvP family. N-terminal subunit subfamily. The glycine cleavage system is composed of four proteins: P, T, L and H. In this organism, the P 'protein' is a heterodimer of two subunits.

It catalyses the reaction N(6)-[(R)-lipoyl]-L-lysyl-[glycine-cleavage complex H protein] + glycine + H(+) = N(6)-[(R)-S(8)-aminomethyldihydrolipoyl]-L-lysyl-[glycine-cleavage complex H protein] + CO2. In terms of biological role, the glycine cleavage system catalyzes the degradation of glycine. The P protein binds the alpha-amino group of glycine through its pyridoxal phosphate cofactor; CO(2) is released and the remaining methylamine moiety is then transferred to the lipoamide cofactor of the H protein. The chain is Probable glycine dehydrogenase (decarboxylating) subunit 1 from Metallosphaera sedula (strain ATCC 51363 / DSM 5348 / JCM 9185 / NBRC 15509 / TH2).